A 135-amino-acid polypeptide reads, in one-letter code: ATP synthase epsilon chain, chloroplastic (135 aa).

This sequence belongs to the ATPase epsilon chain family. F-type ATPases have 2 components, CF(1) - the catalytic core - and CF(0) - the membrane proton channel. CF(1) has five subunits: alpha(3), beta(3), gamma(1), delta(1), epsilon(1). CF(0) has three main subunits: a, b and c.

The protein resides in the plastid. It is found in the chloroplast thylakoid membrane. Functionally, produces ATP from ADP in the presence of a proton gradient across the membrane. The chain is ATP synthase epsilon chain, chloroplastic from Stigeoclonium helveticum (Green alga).